We begin with the raw amino-acid sequence, 371 residues long: Queuine tRNA-ribosyltransferase (371 aa).

Catalysis depends on D92, which acts as the Proton acceptor. Substrate-binding positions include D92–F96, D147, Q190, and G217. Residues G248 to D254 form an RNA binding region. D267 (nucleophile) is an active-site residue. Positions T272–R276 are RNA binding; important for wobble base 34 recognition.

It belongs to the queuine tRNA-ribosyltransferase family. As to quaternary structure, homodimer. Within each dimer, one monomer is responsible for RNA recognition and catalysis, while the other monomer binds to the replacement base PreQ1.

It catalyses the reaction 7-aminomethyl-7-carbaguanine + guanosine(34) in tRNA = 7-aminomethyl-7-carbaguanosine(34) in tRNA + guanine. Its pathway is tRNA modification; tRNA-queuosine biosynthesis. Functionally, catalyzes the base-exchange of a guanine (G) residue with the queuine precursor 7-aminomethyl-7-deazaguanine (PreQ1) at position 34 (anticodon wobble position) in tRNAs with GU(N) anticodons (tRNA-Asp, -Asn, -His and -Tyr). Catalysis occurs through a double-displacement mechanism. The nucleophile active site attacks the C1' of nucleotide 34 to detach the guanine base from the RNA, forming a covalent enzyme-RNA intermediate. The proton acceptor active site deprotonates the incoming PreQ1, allowing a nucleophilic attack on the C1' of the ribose to form the product. After dissociation, two additional enzymatic reactions on the tRNA convert PreQ1 to queuine (Q), resulting in the hypermodified nucleoside queuosine (7-(((4,5-cis-dihydroxy-2-cyclopenten-1-yl)amino)methyl)-7-deazaguanosine). This is Queuine tRNA-ribosyltransferase from Caulobacter vibrioides (strain ATCC 19089 / CIP 103742 / CB 15) (Caulobacter crescentus).